Consider the following 280-residue polypeptide: UDP-3-O-acyl-N-acetylglucosamine deacetylase (280 aa).

Residues H77, H238, and D242 each contribute to the Zn(2+) site. H265 acts as the Proton donor in catalysis.

It belongs to the LpxC family. It depends on Zn(2+) as a cofactor.

The catalysed reaction is a UDP-3-O-[(3R)-3-hydroxyacyl]-N-acetyl-alpha-D-glucosamine + H2O = a UDP-3-O-[(3R)-3-hydroxyacyl]-alpha-D-glucosamine + acetate. Its pathway is glycolipid biosynthesis; lipid IV(A) biosynthesis; lipid IV(A) from (3R)-3-hydroxytetradecanoyl-[acyl-carrier-protein] and UDP-N-acetyl-alpha-D-glucosamine: step 2/6. Functionally, catalyzes the hydrolysis of UDP-3-O-myristoyl-N-acetylglucosamine to form UDP-3-O-myristoylglucosamine and acetate, the committed step in lipid A biosynthesis. The polypeptide is UDP-3-O-acyl-N-acetylglucosamine deacetylase (Nostoc sp. (strain PCC 7120 / SAG 25.82 / UTEX 2576)).